Consider the following 545-residue polypeptide: Chaperonin GroEL (545 aa).

ATP-binding positions include 30–33, Lys-51, 87–91, Gly-415, 479–481, and Asp-495; these read TLGP, DGTTT, and NAA. The tract at residues 526 to 545 is disordered; it reads KDDAPAPAMPDMGGMGGMGM.

It belongs to the chaperonin (HSP60) family. In terms of assembly, forms a cylinder of 14 subunits composed of two heptameric rings stacked back-to-back. Interacts with the co-chaperonin GroES.

The protein localises to the cytoplasm. The catalysed reaction is ATP + H2O + a folded polypeptide = ADP + phosphate + an unfolded polypeptide.. Functionally, together with its co-chaperonin GroES, plays an essential role in assisting protein folding. The GroEL-GroES system forms a nano-cage that allows encapsulation of the non-native substrate proteins and provides a physical environment optimized to promote and accelerate protein folding. The polypeptide is Chaperonin GroEL (Paracidovorax citrulli (strain AAC00-1) (Acidovorax citrulli)).